The primary structure comprises 166 residues: Thioredoxin, mitochondrial (166 aa).

A mitochondrion-targeting transit peptide spans Met-1–Leu-59. Residues Thr-61–Gly-166 form the Thioredoxin domain. Active-site nucleophile residues include Cys-90 and Cys-93. Cys-90 and Cys-93 are joined by a disulfide. Residue Lys-152 is modified to N6-acetyllysine; alternate. Lys-152 is modified (N6-succinyllysine; alternate).

This sequence belongs to the thioredoxin family. In terms of assembly, monomer.

The protein resides in the mitochondrion. Important for the control of mitochondrial reactive oxygen species homeostasis, apoptosis regulation and cell viability. Is involved in various redox reactions including the reduction of protein disulfide bonds, through the reversible oxidation of its active center dithiol to a disulfide. In Mus musculus (Mouse), this protein is Thioredoxin, mitochondrial (Txn2).